The chain runs to 922 residues: MASLKEILIHVEQMEDGSFTLSAFDENEQPLPYSHMKKHLFQWHESSFYGTFLEDVSFIGTTAVLLSPWMTVELLGKNSFNSFSSVQLTEETEPLIEAASTIYEFIADGDFMPDYDAWTNGVFRWKDRDNILEGFTAEWFSAAVQDYIQYDDDLREKWEHIKEKSPAVTTFRGHFLDEEDFLEGIGWIDDQSPFTVGLRLNEPDFDGDEWKIEMFLRDKKSGAVEFFDGLKSLKKSWQAYSDKIAREQDRFHRTVPWLSFDSGTTLISEEEAWIFLSEASETLVDMGVEILLPSWWQIVRDSNMMLKAKVSSSPRGESFVGMNALLDFNWRFATNGIELTEAEFNELVASNRRLVNIRGQWVKIDPQFIKQMKRLMEKAESEGLHMSDILARELMDQQDGGLEDSDLIDTSAFAGIQFDLSKQLRSLIRKLTAAENLPEHKVSPSFKGTLRPYQKYGMNWLLFLRESGFGACLADDMGLGKTIQMIAYFLHVKESGRQKTPHLIIAPTSVLGNWQRELQTFAPDLSVALHYGPRRPKGDDFAAHYENADVVLTSYGLSHADTEELSSVTWNTICLDEAQNIKNAHTKQSRAIRKLKGLHHIALSGTPMENRLTELWSIFDFMNKGYLGSLTGFHKRYVLPIEKDRDEKRIGQLQQLIRPFLLRRTKRDEEVALNLPEKLEEKEFIPLSAEQASLYEQLVKDTFDHMTSLTGMQRKALILSMLGRLKQICDHPALYLKEEQTELLAGRSVKLEKLLELMTAIRAQNESCLIFTQYIQMGNMMKRLLEKTFGEPVQFLNGSLSKQERDTLVEKFQRKEYPTLILSLKAGGTGLNLTAANHVIHYDRWWNPAVENQATDRAYRIGQERFVHVHKMITTGTIEEKIDVMLESKQTLNDQIIQSENWITELSTQELEELFTLSATAQ.

The Helicase ATP-binding domain occupies 462–625 (LFLRESGFGA…WSIFDFMNKG (164 aa)). 475–482 (DDMGLGKT) contributes to the ATP binding site. A DEAQ box motif is present at residues 576–579 (DEAQ). In terms of domain architecture, Helicase C-terminal spans 753 to 907 (KLLELMTAIR…QSENWITELS (155 aa)).

The protein belongs to the SNF2/RAD54 helicase family. As to quaternary structure, interacts with the RNA polymerase core.

The chain is Putative ATP-dependent helicase/translocase YwqA (ywqA) from Bacillus subtilis (strain 168).